An 804-amino-acid polypeptide reads, in one-letter code: Putative mRNA-capping enzyme P5 (804 aa).

The protein belongs to the phytoreovirus protein P5 family.

It localises to the virion. It is found in the host cytoplasm. It catalyses the reaction a 5'-end diphospho-ribonucleoside in mRNA + GTP + H(+) = a 5'-end (5'-triphosphoguanosine)-ribonucleoside in mRNA + diphosphate. The protein operates within mRNA processing; mRNA capping. Its function is as follows. Enzyme involved in mRNA capping (Potential). Binds to GTP and might have guanylyltransferase activity. Together with the RNA-directed RNA polymerase P1 and protein P7, forms an transcriptional complex positioned near the channels situated at each of the five-fold vertices of the core. This Catharanthus roseus (Madagascar periwinkle) protein is Putative mRNA-capping enzyme P5.